A 127-amino-acid polypeptide reads, in one-letter code: MAGNRYFEDQPYEVENPFNIMITLSPFDIDLSTTIMMPKTLLEANLFRFMDISYLVGLLQVPNKPKVIELFDIDTKITTFLTIRRDGDNFKFHGWNNILERKHYKAGDVIAFWWDLHHTRLNFKHVA.

Positions 35–127 (IMMPKTLLEA…HTRLNFKHVA (93 aa)) form a DNA-binding region, TF-B3.

It is found in the nucleus. This chain is Putative B3 domain-containing protein At4g12617, found in Arabidopsis thaliana (Mouse-ear cress).